The primary structure comprises 395 residues: Probable peptidoglycan glycosyltransferase FtsW (395 aa).

Over 1–24 (MADLAAGVAERGPRLSLWSSLDQR) the chain is Cytoplasmic. Residues 25-45 (LVWVVAATALLGLVMVASASI) traverse the membrane as a helical segment. The Periplasmic segment spans residues 46 to 62 (SMAEQATGDPFYFFKRQ). The helical transmembrane segment at 63–83 (IFFALLGLGMALALLQIPLAT) threads the bilayer. Over 84-86 (WER) the chain is Cytoplasmic. A helical membrane pass occupies residues 87-107 (AGPGLLLGALALLVLVLIPGV). At 108–116 (GREVNGAVR) the chain is on the periplasmic side. Residues 117–137 (WIPLGVFNLQVAEVVKVLLAL) traverse the membrane as a helical segment. Residues 138-152 (YLAGFLVRRQQQLRT) lie on the Cytoplasmic side of the membrane. Residues 153-173 (SMAAFLVPVLVSAACAFLLLL) traverse the membrane as a helical segment. Residues 174 to 178 (QPDFG) are Periplasmic-facing. A helical transmembrane segment spans residues 179–199 (TALMLMALAVGLLYLAGAPLW). Position 200 (Arg-200) is a topological domain, cytoplasmic. A helical membrane pass occupies residues 201-221 (FAALVGVLAAAAAALVVYSPY). Topologically, residues 222 to 276 (RWQRVTAFMDPWSDPFNTGFQLTQSLIAIGRGDWLGVGLGGSVQKLFYLPEAHTD) are periplasmic. The helical transmembrane segment at 277–297 (FVFSVLAEELGWLGVLAVVLL) threads the bilayer. Topologically, residues 298–316 (FSYIVWRAMAVGWQCHRHR) are cytoplasmic. Residues 317–337 (LPFAGYLAWAVGLALGLQAFI) traverse the membrane as a helical segment. Residues 338-352 (NMGVATGLLPTKGLT) lie on the Periplasmic side of the membrane. The helical transmembrane segment at 353 to 373 (LPLFSYGGSSALATGAMVGLL) threads the bilayer. At 374-395 (LRCGYELAQARAEGRRPEEAAS) the chain is on the cytoplasmic side.

The protein belongs to the SEDS family. FtsW subfamily.

Its subcellular location is the cell inner membrane. It carries out the reaction [GlcNAc-(1-&gt;4)-Mur2Ac(oyl-L-Ala-gamma-D-Glu-L-Lys-D-Ala-D-Ala)](n)-di-trans,octa-cis-undecaprenyl diphosphate + beta-D-GlcNAc-(1-&gt;4)-Mur2Ac(oyl-L-Ala-gamma-D-Glu-L-Lys-D-Ala-D-Ala)-di-trans,octa-cis-undecaprenyl diphosphate = [GlcNAc-(1-&gt;4)-Mur2Ac(oyl-L-Ala-gamma-D-Glu-L-Lys-D-Ala-D-Ala)](n+1)-di-trans,octa-cis-undecaprenyl diphosphate + di-trans,octa-cis-undecaprenyl diphosphate + H(+). Its pathway is cell wall biogenesis; peptidoglycan biosynthesis. Its function is as follows. Peptidoglycan polymerase that is essential for cell division. The sequence is that of Probable peptidoglycan glycosyltransferase FtsW from Halorhodospira halophila (strain DSM 244 / SL1) (Ectothiorhodospira halophila (strain DSM 244 / SL1)).